The chain runs to 191 residues: Protein GrpE (191 aa).

The segment covering 1–19 (MKDEHNQKHDHLSQKEPES) has biased composition (basic and acidic residues). The interval 1–44 (MKDEHNQKHDHLSQKEPESYQKACACKEQQDEEMQEAGEKEGEI) is disordered.

This sequence belongs to the GrpE family. As to quaternary structure, homodimer.

The protein resides in the cytoplasm. Participates actively in the response to hyperosmotic and heat shock by preventing the aggregation of stress-denatured proteins, in association with DnaK and GrpE. It is the nucleotide exchange factor for DnaK and may function as a thermosensor. Unfolded proteins bind initially to DnaJ; upon interaction with the DnaJ-bound protein, DnaK hydrolyzes its bound ATP, resulting in the formation of a stable complex. GrpE releases ADP from DnaK; ATP binding to DnaK triggers the release of the substrate protein, thus completing the reaction cycle. Several rounds of ATP-dependent interactions between DnaJ, DnaK and GrpE are required for fully efficient folding. The sequence is that of Protein GrpE from Helicobacter pylori (strain G27).